A 394-amino-acid chain; its full sequence is Phloroisovalerophenone synthase (394 aa).

Residue Cys-166 is part of the active site.

The protein belongs to the thiolase-like superfamily. Chalcone/stilbene synthases family. Homodimer. In terms of tissue distribution, expressed in lupulin gland. Present at low levels in leaves but accumulates in cones.

The catalysed reaction is 3-methylbutanoyl-CoA + 3 malonyl-CoA + 3 H(+) = phlorisovalerophenone + 3 CO2 + 4 CoA. It carries out the reaction (E)-4-coumaroyl-CoA + 3 malonyl-CoA + 3 H(+) = 2',4,4',6'-tetrahydroxychalcone + 3 CO2 + 4 CoA. The enzyme catalyses 2-methylpropanoyl-CoA + 3 malonyl-CoA + 3 H(+) = phlorisobutanophenone + 3 CO2 + 4 CoA. Its pathway is secondary metabolite biosynthesis. In terms of biological role, involved in the biosynthesis of prenylated phenolics natural products which contribute to the bitter taste of beer and display broad biological activities. Polyketide synthase that can use 3-methylbutanoyl-CoA (isovaleryl-CoA) and 2-methylpropanoyl-CoA (isobutyryl-CoA) as substrates to produce phlorisovalerophenone (PIVP) and phlorisobutyrophenone (2-methyl-1-(2,4,6-trihydroxyphenyl)propan-1-one), respectively, intermediates in the biosynthesis of the bitter acids (alpha and beta) acids. Can also produce naringenin-chalcone (2',4,4',6'-tetrahydroxychalcone) from 4-coumaroyl-CoA with a lower efficiency. This is Phloroisovalerophenone synthase from Humulus lupulus (European hop).